We begin with the raw amino-acid sequence, 214 residues long: uncharacterized protein (214 aa).

A run of 4 helical transmembrane segments spans residues 43-63, 84-104, 116-136, and 150-170; these read IQKP…AAHI, IEWA…IPVI, ALVI…EYFI, and PVTR…FGIF.

The protein resides in the host membrane. This is an uncharacterized protein from Citrus leprosis virus C (isolate Citrus sinesis/Brazil/Cordeiropolis/2003) (CiLV-C).